We begin with the raw amino-acid sequence, 211 residues long: uncharacterized protein (211 aa).

A run of 6 helical transmembrane segments spans residues 21–38, 53–75, 82–104, 124–146, 159–178, and 188–210; these read WYVITLLLVVIYIYASEI, WGMDWFNEIWNALVFHFTNYAAV, TAYLILIGLNIEISMMFAIMGVA, IFYAIVLSAACVVVEIILNAANV, PLLIFLIGYLPFFLVAYWVY, and AVSFGILAIDAVLLIVFAGLMEW.

The protein localises to the cell membrane. This is an uncharacterized protein from Archaeoglobus fulgidus (strain ATCC 49558 / DSM 4304 / JCM 9628 / NBRC 100126 / VC-16).